The primary structure comprises 397 residues: Proteasome-activating nucleotidase (397 aa).

The stretch at 12–58 forms a coiled coil; the sequence is GYEDYITFLKRRIRQLELQVRTLEADKERLERELSRLRTEMSRLRQP. ATP is bound by residues 182–187 and histidine 321; that span reads GCGKTL. The segment at 395–397 is docks into pockets in the proteasome alpha-ring to cause gate opening; it reads MYG.

It belongs to the AAA ATPase family. As to quaternary structure, homohexamer. The hexameric complex has a two-ring architecture resembling a top hat that caps the 20S proteasome core at one or both ends. Upon ATP-binding, the C-terminus of PAN interacts with the alpha-rings of the proteasome core by binding to the intersubunit pockets.

Its subcellular location is the cytoplasm. In terms of biological role, ATPase which is responsible for recognizing, binding, unfolding and translocation of substrate proteins into the archaeal 20S proteasome core particle. Is essential for opening the gate of the 20S proteasome via an interaction with its C-terminus, thereby allowing substrate entry and access to the site of proteolysis. Thus, the C-termini of the proteasomal ATPase function like a 'key in a lock' to induce gate opening and therefore regulate proteolysis. Unfolding activity requires energy from ATP hydrolysis, whereas ATP binding alone promotes ATPase-20S proteasome association which triggers gate opening, and supports translocation of unfolded substrates. This Thermococcus gammatolerans (strain DSM 15229 / JCM 11827 / EJ3) protein is Proteasome-activating nucleotidase.